The sequence spans 303 residues: Signal recognition particle receptor FtsY (303 aa).

Residues 108–115 (GVNGVGKT), 190–194 (DTAGR), and 254–257 (TKLD) contribute to the GTP site.

This sequence belongs to the GTP-binding SRP family. FtsY subfamily. Part of the signal recognition particle protein translocation system, which is composed of SRP and FtsY. SRP is a ribonucleoprotein composed of Ffh and a 4.5S RNA molecule.

It localises to the cell inner membrane. Its subcellular location is the cytoplasm. It carries out the reaction GTP + H2O = GDP + phosphate + H(+). Involved in targeting and insertion of nascent membrane proteins into the cytoplasmic membrane. Acts as a receptor for the complex formed by the signal recognition particle (SRP) and the ribosome-nascent chain (RNC). Interaction with SRP-RNC leads to the transfer of the RNC complex to the Sec translocase for insertion into the membrane, the hydrolysis of GTP by both Ffh and FtsY, and the dissociation of the SRP-FtsY complex into the individual components. This Rickettsia prowazekii (strain Madrid E) protein is Signal recognition particle receptor FtsY.